Reading from the N-terminus, the 338-residue chain is Nicotinate-nucleotide--dimethylbenzimidazole phosphoribosyltransferase (338 aa).

The active-site Proton acceptor is Glu-306.

It belongs to the CobT family.

The catalysed reaction is 5,6-dimethylbenzimidazole + nicotinate beta-D-ribonucleotide = alpha-ribazole 5'-phosphate + nicotinate + H(+). It functions in the pathway nucleoside biosynthesis; alpha-ribazole biosynthesis; alpha-ribazole from 5,6-dimethylbenzimidazole: step 1/2. Catalyzes the synthesis of alpha-ribazole-5'-phosphate from nicotinate mononucleotide (NAMN) and 5,6-dimethylbenzimidazole (DMB). The sequence is that of Nicotinate-nucleotide--dimethylbenzimidazole phosphoribosyltransferase from Cereibacter sphaeroides (strain ATCC 17023 / DSM 158 / JCM 6121 / CCUG 31486 / LMG 2827 / NBRC 12203 / NCIMB 8253 / ATH 2.4.1.) (Rhodobacter sphaeroides).